The primary structure comprises 357 residues: UDP-N-acetylglucosamine--N-acetylmuramyl-(pentapeptide) pyrophosphoryl-undecaprenol N-acetylglucosamine transferase (357 aa).

Residues 10-12, N124, S189, I244, and Q289 contribute to the UDP-N-acetyl-alpha-D-glucosamine site; that span reads TGG.

Belongs to the glycosyltransferase 28 family. MurG subfamily.

The protein resides in the cell membrane. It catalyses the reaction Mur2Ac(oyl-L-Ala-gamma-D-Glu-L-Lys-D-Ala-D-Ala)-di-trans,octa-cis-undecaprenyl diphosphate + UDP-N-acetyl-alpha-D-glucosamine = beta-D-GlcNAc-(1-&gt;4)-Mur2Ac(oyl-L-Ala-gamma-D-Glu-L-Lys-D-Ala-D-Ala)-di-trans,octa-cis-undecaprenyl diphosphate + UDP + H(+). It functions in the pathway cell wall biogenesis; peptidoglycan biosynthesis. Cell wall formation. Catalyzes the transfer of a GlcNAc subunit on undecaprenyl-pyrophosphoryl-MurNAc-pentapeptide (lipid intermediate I) to form undecaprenyl-pyrophosphoryl-MurNAc-(pentapeptide)GlcNAc (lipid intermediate II). This chain is UDP-N-acetylglucosamine--N-acetylmuramyl-(pentapeptide) pyrophosphoryl-undecaprenol N-acetylglucosamine transferase, found in Lactococcus lactis subsp. cremoris (strain MG1363).